A 236-amino-acid chain; its full sequence is UPF0257 lipoprotein YnfC (236 aa).

The first 16 residues, 1–16 (MKKPLLLTLLCMILAG), serve as a signal peptide directing secretion. C17 carries the N-palmitoyl cysteine lipid modification. C17 carries S-diacylglycerol cysteine lipidation.

It belongs to the UPF0257 family.

The protein resides in the cell membrane. The chain is UPF0257 lipoprotein YnfC from Salmonella typhi.